The sequence spans 155 residues: UPF0260 protein R01011 (155 aa).

This sequence belongs to the UPF0260 family.

The polypeptide is UPF0260 protein R01011 (Rhizobium meliloti (strain 1021) (Ensifer meliloti)).